The following is a 248-amino-acid chain: Proteasome subunit alpha type-7 (248 aa).

S130 carries O-linked (GlcNAc) serine glycosylation. A Phosphotyrosine modification is found at Y153.

The protein belongs to the peptidase T1A family. As to quaternary structure, the 26S proteasome consists of a 20S proteasome core and two 19S regulatory subunits. The 20S proteasome core is a barrel-shaped complex made of 28 subunits that are arranged in four stacked rings. The two outer rings are each formed by seven alpha subunits, and the two inner rings are formed by seven beta subunits. The proteolytic activity is exerted by three beta-subunits PSMB5, PSMB6 and PSMB7. PSMA7 interacts directly with the PSMG1-PSMG2 heterodimer which promotes 20S proteasome assembly. Interacts with HIF1A. Interacts with RAB7A. Interacts with PRKN. Interacts with ABL1 and ABL2. Interacts with EMAP2. Interacts with MAVS.

It localises to the cytoplasm. The protein localises to the nucleus. In terms of biological role, component of the 20S core proteasome complex involved in the proteolytic degradation of most intracellular proteins. This complex plays numerous essential roles within the cell by associating with different regulatory particles. Associated with two 19S regulatory particles, forms the 26S proteasome and thus participates in the ATP-dependent degradation of ubiquitinated proteins. The 26S proteasome plays a key role in the maintenance of protein homeostasis by removing misfolded or damaged proteins that could impair cellular functions, and by removing proteins whose functions are no longer required. Associated with the PA200 or PA28, the 20S proteasome mediates ubiquitin-independent protein degradation. This type of proteolysis is required in several pathways including spermatogenesis (20S-PA200 complex) or generation of a subset of MHC class I-presented antigenic peptides (20S-PA28 complex). Inhibits the transactivation function of HIF-1A under both normoxic and hypoxia-mimicking conditions. The interaction with EMAP2 increases the proteasome-mediated HIF-1A degradation under the hypoxic conditions. Plays a role in hepatitis C virus internal ribosome entry site-mediated translation. Mediates nuclear translocation of the androgen receptor (AR) and thereby enhances androgen-mediated transactivation. Promotes MAVS degradation and thereby negatively regulates MAVS-mediated innate immune response. This chain is Proteasome subunit alpha type-7 (PSMA7), found in Pongo abelii (Sumatran orangutan).